The sequence spans 385 residues: Acetate kinase (385 aa).

Residue Asn-9 coordinates Mg(2+). Residue Lys-16 participates in ATP binding. Arg-87 is a substrate binding site. Asp-144 functions as the Proton donor/acceptor in the catalytic mechanism. ATP is bound by residues 202-206 (HLGSG) and 277-279 (DMR). Residue Glu-373 participates in Mg(2+) binding.

It belongs to the acetokinase family. In terms of assembly, homodimer. The cofactor is Mg(2+). It depends on Mn(2+) as a cofactor.

The protein localises to the cytoplasm. The catalysed reaction is acetate + ATP = acetyl phosphate + ADP. It functions in the pathway metabolic intermediate biosynthesis; acetyl-CoA biosynthesis; acetyl-CoA from acetate: step 1/2. In terms of biological role, catalyzes the formation of acetyl phosphate from acetate and ATP. Can also catalyze the reverse reaction. The chain is Acetate kinase from Rickettsia felis (strain ATCC VR-1525 / URRWXCal2) (Rickettsia azadi).